The primary structure comprises 787 residues: Endonuclease MutS2 (787 aa).

331–338 (GPNTGGKT) contacts ATP. The 76-residue stretch at 711–786 (IDVRGKTSDD…EQGVTIVELR (76 aa)) folds into the Smr domain.

This sequence belongs to the DNA mismatch repair MutS family. MutS2 subfamily. As to quaternary structure, homodimer. Binds to stalled ribosomes, contacting rRNA.

Functionally, endonuclease that is involved in the suppression of homologous recombination and thus may have a key role in the control of bacterial genetic diversity. Its function is as follows. Acts as a ribosome collision sensor, splitting the ribosome into its 2 subunits. Detects stalled/collided 70S ribosomes which it binds and splits by an ATP-hydrolysis driven conformational change. Acts upstream of the ribosome quality control system (RQC), a ribosome-associated complex that mediates the extraction of incompletely synthesized nascent chains from stalled ribosomes and their subsequent degradation. Probably generates substrates for RQC. In Caldicellulosiruptor saccharolyticus (strain ATCC 43494 / DSM 8903 / Tp8T 6331), this protein is Endonuclease MutS2.